The primary structure comprises 251 residues: 2,3-bisphosphoglycerate-dependent phosphoglycerate mutase (251 aa).

Residues 8 to 15 (RHGESLWN), 21 to 22 (TG), Arg60, 87 to 90 (ERHY), Lys98, 114 to 115 (RR), and 183 to 184 (GN) each bind substrate. The Tele-phosphohistidine intermediate role is filled by His9. The active-site Proton donor/acceptor is Glu87.

This sequence belongs to the phosphoglycerate mutase family. BPG-dependent PGAM subfamily.

The catalysed reaction is (2R)-2-phosphoglycerate = (2R)-3-phosphoglycerate. The protein operates within carbohydrate degradation; glycolysis; pyruvate from D-glyceraldehyde 3-phosphate: step 3/5. In terms of biological role, catalyzes the interconversion of 2-phosphoglycerate and 3-phosphoglycerate. This chain is 2,3-bisphosphoglycerate-dependent phosphoglycerate mutase, found in Thermoanaerobacter pseudethanolicus (strain ATCC 33223 / 39E) (Clostridium thermohydrosulfuricum).